The following is a 636-amino-acid chain: Topoisomerase I damage affected protein 7 (636 aa).

The span at 1-18 shows a compositional bias: polar residues; the sequence is MNSNSTIGRTTLGESDTI. Disordered regions lie at residues 1 to 33, 87 to 109, 246 to 271, 299 to 326, and 339 to 362; these read MNSN…NSRS, TLVS…QYDP, NKDT…SSTN, PTSS…DDTT, and QSTT…STSP. The N-linked (GlcNAc...) asparagine glycan is linked to asparagine 4. Low complexity-rich tracts occupy residues 19 to 33 and 87 to 108; these read SLSF…NSRS and TLVS…SQYD. Asparagine 257 is a glycosylation site (N-linked (GlcNAc...) asparagine). Residues 457–477 traverse the membrane as a helical segment; it reads IVGSVVGSVGGILICVLVVWF. Asparagine 492 carries an N-linked (GlcNAc...) asparagine glycan. Polar residues predominate over residues 510 to 541; the sequence is QAKEASLQAQDSGSQQRNTETASANNPFSNEF. The interval 510–551 is disordered; the sequence is QAKEASLQAQDSGSQQRNTETASANNPFSNEFNFKARGNPPP. Lysine 512 participates in a covalent cross-link: Glycyl lysine isopeptide (Lys-Gly) (interchain with G-Cter in ubiquitin). 3 N-linked (GlcNAc...) asparagine glycosylation sites follow: asparagine 557, asparagine 562, and asparagine 626. Residue serine 628 is modified to Phosphoserine.

The protein belongs to the TDA7 family.

The protein resides in the vacuole membrane. This Saccharomyces cerevisiae (strain ATCC 204508 / S288c) (Baker's yeast) protein is Topoisomerase I damage affected protein 7 (TDA7).